The sequence spans 574 residues: Regulatory protein NPR4 (574 aa).

The tract at residues 1–21 (MAATAIEPSSSISFTSSHLSN) is disordered. Over residues 9–20 (SSSISFTSSHLS) the composition is skewed to low complexity. Ser-11 carries the post-translational modification Phosphoserine. The 77-residue stretch at 54–130 (TDAEIIIEEE…IYTGRLKPFP (77 aa)) folds into the BTB domain. The C2HC NPR-type zinc-finger motif lies at 133–147 (VSTCVDSVCAHDSCK). Positions 136, 141, 143, and 146 each coordinate Zn(2+). 3 ANK repeats span residues 252 to 280 (ERTG…DITL), 281 to 311 (DQAN…DVNF), and 315 to 344 (RGYT…NASD). The interval 373–516 (EPSKYRLCID…MDQYMDEEIP (144 aa)) is salicylic acid-binding core (SBC). A salicylate-binding site is contributed by Arg-419. Residues 521 to 574 (PEKGTVKERRQKRMRYNELKNDVKKAYSKDKVARSCLSSSSPASSLREALENPT) form a disordered region. Over residues 535–553 (RYNELKNDVKKAYSKDKVA) the composition is skewed to basic and acidic residues. Low complexity predominate over residues 554–567 (RSCLSSSSPASSLR).

The protein belongs to the plant 'ANKYRIN-BTB/POZ' family. 'NPR1-like' subfamily. As to quaternary structure, forms homodimers, homotetramers and heterodimers with NPR3 in the presence of salicylic acid (SA). Interacts with TGA2, TGA3, TGA5, TGA6 and TGA7. Interacts with CUL3A, a core component of the cullin-RING ubiquitin ligases (CRL). Binds to NPR1; this interaction is disrupted by association with SA, probably due to conformational changes.

It localises to the nucleus. Its pathway is protein modification; protein ubiquitination. Functionally, salicylic acid (SA)-binding substrate-specific adapter of an E3 ubiquitin-protein ligase complex (CUL3-RBX1-BTB) which mediates the ubiquitination and subsequent proteasomal degradation of NPR1 in the absence of SA. Together with NPR3, acts as receptor of salicylic acid to monitor immunity in a NPR1-dependent manner and induce systemic acquired resistance (SAR). Involved in the regulation of basal defense responses against pathogens, and may be implicated in the cross-talk between the SA- and JA-dependent signaling pathways. The chain is Regulatory protein NPR4 from Arabidopsis thaliana (Mouse-ear cress).